The following is a 235-amino-acid chain: Elongation factor Tu (235 aa).

A tr-type G domain is found at 1 to 125 (KNMITGAAQM…EVDEYIPTPE (125 aa)). 47-50 (NKED) is a GTP binding site.

This sequence belongs to the TRAFAC class translation factor GTPase superfamily. Classic translation factor GTPase family. EF-Tu/EF-1A subfamily. As to quaternary structure, monomer.

Its subcellular location is the cytoplasm. It carries out the reaction GTP + H2O = GDP + phosphate + H(+). In terms of biological role, GTP hydrolase that promotes the GTP-dependent binding of aminoacyl-tRNA to the A-site of ribosomes during protein biosynthesis. This chain is Elongation factor Tu (tufA), found in Gloeothece membranacea (strain PCC 6501 / SAG 26.84).